The chain runs to 290 residues: Glutaredoxin domain-containing cysteine-rich protein 1 (290 aa).

In terms of domain architecture, Glutaredoxin spans 127–234 (LQQPSADLEF…DLLTKIERVQ (108 aa)).

Belongs to the GRXCR1 family. In the inner ear, expressed predominantly in sensory hair cells and their stereocilia bundles with higher levels in outer hair cells (OHC) at P1 and in inner hair cells (IHC) at P5. At P1, expression is prominent in each row of stereocilia within bundles including immature shorter stereocilia. Expression is also observed in apical microvilli of sensory cells at P1 and in kinocilia at P1 and P5. In the adult, expression is localized throughout the length of the stereocilia of both OHC and IHC (at protein level).

Its subcellular location is the cell projection. The protein localises to the stereocilium. The protein resides in the microvillus. It is found in the kinocilium. Its function is as follows. May play a role in actin filament architecture in developing stereocilia of sensory cells. The polypeptide is Glutaredoxin domain-containing cysteine-rich protein 1 (Grxcr1) (Mus musculus (Mouse)).